Here is a 348-residue protein sequence, read N- to C-terminus: 3-isopropylmalate dehydrogenase (348 aa).

76–87 is an NAD(+) binding site; that stretch reads GPKWTDPNNRPE. Substrate contacts are provided by Arg94, Arg104, Arg132, and Asp217. Asp217, Asp241, and Asp245 together coordinate Mg(2+). 275-287 provides a ligand contact to NAD(+); the sequence is GSAPDIAGKNVAN.

This sequence belongs to the isocitrate and isopropylmalate dehydrogenases family. LeuB type 1 subfamily. In terms of assembly, homodimer. Mg(2+) serves as cofactor. Mn(2+) is required as a cofactor.

The protein localises to the cytoplasm. It catalyses the reaction (2R,3S)-3-isopropylmalate + NAD(+) = 4-methyl-2-oxopentanoate + CO2 + NADH. Its pathway is amino-acid biosynthesis; L-leucine biosynthesis; L-leucine from 3-methyl-2-oxobutanoate: step 3/4. Functionally, catalyzes the oxidation of 3-carboxy-2-hydroxy-4-methylpentanoate (3-isopropylmalate) to 3-carboxy-4-methyl-2-oxopentanoate. The product decarboxylates to 4-methyl-2 oxopentanoate. The polypeptide is 3-isopropylmalate dehydrogenase (Staphylococcus aureus (strain MW2)).